Consider the following 240-residue polypeptide: Protein unc-119 homolog A (240 aa).

A compositionally biased stretch (gly residues) spans 1-12 (MKVKKGGGGAGT). Residues 1-61 (MKVKKGGGGA…GPLQRKQRIG (61 aa)) are disordered. Positions 13–23 (GAEPASGAPGP) are enriched in low complexity. Phosphoserine; by CK2 is present on residues serine 37, serine 39, and serine 41. Tyrosine 131 provides a ligand contact to tetradecanoate.

It belongs to the PDE6D/unc-119 family. In terms of assembly, interacts with CABP4; in the absence of calcium. May interact with GTP-bound ARL1. Interacts with ARL2 and ARL3 (GTP-bound forms); this promotes the release of myristoylated cargo proteins. Found in a complex with ARL3, RP2 and UNC119; RP2 induces hydrolysis of GTP ARL3 in the complex, leading to the release of UNC119. Interacts with NPHP3 (when myristoylated). Interacts with CYS1 (when myristoylated). Interacts with MACIR; interaction only takes place when UNC119 is not liganded with myristoylated proteins. Interacts with LCK; this interaction plays a crucial role in activation of LCK. Interacts with FYN. Interacts with RAB11A; in a cell cycle-dependent manner. Interacts with LYN (via SH2 and SH3 domains); leading to LYN activation. Interacts with DNM1; leading to a decrease of DNM1 GTPase activity. Found in a complex with ABL1, ABL2, CRK and UNC119; leading to the inhibition of CRK phosphorylation by ABL kinases. Interacts with CD44. Interacts with KLHL18 (via kelch repeats). Interacts with PPP3CA, PPP3CB and PPP3CC. Interacts with USP48; this interaction promotes UNC119 stability. Phosphorylation suppresses its interaction with KLHL18 and down-regulates its KLHL18-mediated degradation. Phosphorylated more under light conditions than dark conditions. Dephosphorylated by calcineurin.

Its subcellular location is the cytoplasm. It is found in the cytoskeleton. The protein resides in the microtubule organizing center. It localises to the centrosome. The protein localises to the spindle. Its subcellular location is the spindle pole. In terms of biological role, involved in synaptic functions in photoreceptor cells, the signal transduction in immune cells as a Src family kinase activator, endosome recycling, the uptake of bacteria and endocytosis, protein trafficking in sensory neurons and as lipid-binding chaperone with specificity for a diverse subset of myristoylated proteins. Specifically binds the myristoyl moiety of a subset of N-terminally myristoylated proteins and is required for their localization. Binds myristoylated GNAT1 and is required for G-protein localization and trafficking in sensory neurons. Probably plays a role in trafficking proteins in photoreceptor cells. Plays important roles in mediating Src family kinase signals for the completion of cytokinesis via RAB11A. The protein is Protein unc-119 homolog A (UNC119) of Canis lupus familiaris (Dog).